Consider the following 804-residue polypeptide: Phenylalanine--tRNA ligase beta subunit (804 aa).

The 114-residue stretch at 40–153 (PLPDLRVVVG…SSYAVGEPFA (114 aa)) folds into the tRNA-binding domain. A B5 domain is found at 400-476 (PALLVLPFRP…RLHGYDNIEA (77 aa)). Mg(2+)-binding residues include D454, D460, E463, and E464. The region spanning 710–802 (SKFPAVQRDL…AESKLGAVIR (93 aa)) is the FDX-ACB domain.

Belongs to the phenylalanyl-tRNA synthetase beta subunit family. Type 1 subfamily. In terms of assembly, tetramer of two alpha and two beta subunits. The cofactor is Mg(2+).

It is found in the cytoplasm. It carries out the reaction tRNA(Phe) + L-phenylalanine + ATP = L-phenylalanyl-tRNA(Phe) + AMP + diphosphate + H(+). This Chlorobium luteolum (strain DSM 273 / BCRC 81028 / 2530) (Pelodictyon luteolum) protein is Phenylalanine--tRNA ligase beta subunit.